Consider the following 178-residue polypeptide: Cytochrome b6-f complex iron-sulfur subunit (178 aa).

Residues 20–42 (LLTFGTVTGVALGALYPVAQYFT) form a helical membrane-spanning segment. Residues 71–161 (THPVGDRSLV…VSIEDDQVLV (91 aa)) enclose the Rieske domain. The [2Fe-2S] cluster site is built by C107, H109, C125, and H128. C112 and C127 are disulfide-bonded.

The protein belongs to the Rieske iron-sulfur protein family. In terms of assembly, the 4 large subunits of the cytochrome b6-f complex are cytochrome b6, subunit IV (17 kDa polypeptide, PetD), cytochrome f and the Rieske protein, while the 4 small subunits are PetG, PetL, PetM and PetN. The complex functions as a dimer. Requires [2Fe-2S] cluster as cofactor.

It localises to the cellular thylakoid membrane. The catalysed reaction is 2 oxidized [plastocyanin] + a plastoquinol + 2 H(+)(in) = 2 reduced [plastocyanin] + a plastoquinone + 4 H(+)(out). Component of the cytochrome b6-f complex, which mediates electron transfer between photosystem II (PSII) and photosystem I (PSI), cyclic electron flow around PSI, and state transitions. The protein is Cytochrome b6-f complex iron-sulfur subunit of Prochlorococcus marinus (strain NATL1A).